We begin with the raw amino-acid sequence, 382 residues long: Mannitol-1-phosphate 5-dehydrogenase (382 aa).

3–14 (ALHFGAGNIGRG) is a binding site for NAD(+).

The protein belongs to the mannitol dehydrogenase family.

It carries out the reaction D-mannitol 1-phosphate + NAD(+) = beta-D-fructose 6-phosphate + NADH + H(+). This Mannheimia succiniciproducens (strain KCTC 0769BP / MBEL55E) protein is Mannitol-1-phosphate 5-dehydrogenase.